The sequence spans 421 residues: Synaptotagmin-12 (421 aa).

Residues 1-18 (MAVDVTEYHLSVIKSPPG) lie on the Vesicular side of the membrane. Residues 19–39 (WEVGVYAAGALALLGIAAVSL) traverse the membrane as a helical segment. At 40 to 421 (WKLWTSGSFP…VSMWHPVRRN (382 aa)) the chain is on the cytoplasmic side. S97 is subject to Phosphoserine; by PKA. Phosphoserine occurs at positions 99 and 214. 2 C2 domains span residues 152-272 (TLGQ…SGWL) and 283-416 (AVGE…SMWH).

This sequence belongs to the synaptotagmin family. In terms of assembly, homodimer. Can also form heterodimers. Interacts with SYT1. Phosphorylation of Ser-97 is required for mossy-fiber long-term potentiation. As to expression, expressed in the brain, specifically in neurons of the cerebellum, cortex, hippocampus, olfactory bulb, brainstem and spinal cord (at protein level).

It localises to the cytoplasmic vesicle. The protein resides in the secretory vesicle. It is found in the synaptic vesicle membrane. Synaptic vesicle phosphoprotein that enhances spontaneous neurotransmitter release but does not effect induced neurotransmitter release. Unlike other synaptotagmins, it does not bind Ca(2+) or phospholipids. Essential for mossy-fiber long-term potentiation in the hippocampus. The sequence is that of Synaptotagmin-12 from Rattus norvegicus (Rat).